Here is a 188-residue protein sequence, read N- to C-terminus: Putative adenylate kinase (188 aa).

ATP contacts are provided by glycine 10, glycine 12, lysine 13, serine 14, and threonine 15. Residues 30–53 are NMP; sequence HVSSFLIQNKAFSEYDELRQSYVI. The tract at residues 103-113 is LID; it reads RRGWGELKIAE. The ATP site is built by arginine 104 and lysine 142.

This sequence belongs to the adenylate kinase family. AK6 subfamily. In terms of assembly, interacts with uS11. Not a structural component of 40S pre-ribosomes, but transiently interacts with them by binding to uS11.

It catalyses the reaction AMP + ATP = 2 ADP. It carries out the reaction ATP + H2O = ADP + phosphate + H(+). In terms of biological role, broad-specificity nucleoside monophosphate (NMP) kinase that catalyzes the reversible transfer of the terminal phosphate group between nucleoside triphosphates and monophosphates. Also has ATPase activity. Involved in the late maturation steps of the 30S ribosomal particles, specifically 16S rRNA maturation. While NMP activity is not required for ribosome maturation, ATPase activity is. Associates transiently with small ribosomal subunit protein uS11. ATP hydrolysis breaks the interaction with uS11. May temporarily remove uS11 from the ribosome to enable a conformational change of the ribosomal RNA that is needed for the final maturation step of the small ribosomal subunit. The sequence is that of Putative adenylate kinase from Sulfurisphaera tokodaii (strain DSM 16993 / JCM 10545 / NBRC 100140 / 7) (Sulfolobus tokodaii).